A 389-amino-acid chain; its full sequence is Phenylpropanoylacetyl-CoA synthase (389 aa).

The active site involves cysteine 163.

It belongs to the thiolase-like superfamily. Chalcone/stilbene synthases family. Homodimer. In terms of tissue distribution, expressed in both the leaf and rhizome, with higher expression in the rhizome.

The enzyme catalyses (E)-feruloyl-CoA + malonyl-CoA + H(+) = (E)-feruloylacetyl-CoA + CO2 + CoA. It carries out the reaction 4-coumaroyl-CoA + malonyl-CoA + H(+) = (4-coumaroyl)acetyl-CoA + CO2 + CoA. The protein operates within secondary metabolite biosynthesis; flavonoid biosynthesis. Functionally, catalyzes the formation of feruloyldiketide-CoA by condensing feruloyl-CoA and malonyl-CoA in the curcuminoid biosynthesis. Has no activity with cinnamoyl-CoA. This chain is Phenylpropanoylacetyl-CoA synthase (DCS), found in Curcuma longa (Turmeric).